A 255-amino-acid chain; its full sequence is Myogenic factor 5 (255 aa).

Residues 83-134 form the bHLH domain; the sequence is DRRKAATMRERRRLKKVNQAFETLKRCTTTNPNQRLPKVEILRNAIRYIESL. The disordered stretch occupies residues 226 to 249; the sequence is DTASLSPATSANSQPATPGPSSSR.

As to quaternary structure, efficient DNA binding requires dimerization with another bHLH protein.

Its subcellular location is the nucleus. Acts as a transcriptional activator that promotes transcription of muscle-specific target genes and plays a role in muscle differentiation. Together with MYOG and MYOD1, co-occupies muscle-specific gene promoter core region during myogenesis. Induces fibroblasts to differentiate into myoblasts. Probable sequence specific DNA-binding protein. In Mus musculus (Mouse), this protein is Myogenic factor 5 (Myf5).